Here is a 200-residue protein sequence, read N- to C-terminus: Recombination protein RecR (200 aa).

The C4-type zinc-finger motif lies at 58-73 (CSVCGNLTDTDPCFIC). In terms of domain architecture, Toprim spans 81–176 (DLLCVVERPR…SVTRIAHGLP (96 aa)).

It belongs to the RecR family.

Functionally, may play a role in DNA repair. It seems to be involved in an RecBC-independent recombinational process of DNA repair. It may act with RecF and RecO. The sequence is that of Recombination protein RecR from Pelotomaculum thermopropionicum (strain DSM 13744 / JCM 10971 / SI).